The primary structure comprises 331 residues: tRNA-modifying protein YgfZ (331 aa).

2 residues coordinate folate: W28 and W191.

It belongs to the tRNA-modifying YgfZ family.

It localises to the cytoplasm. Folate-binding protein involved in regulating the level of ATP-DnaA and in the modification of some tRNAs. It is probably a key factor in regulatory networks that act via tRNA modification, such as initiation of chromosomal replication. In Edwardsiella ictaluri (strain 93-146), this protein is tRNA-modifying protein YgfZ.